Here is a 270-residue protein sequence, read N- to C-terminus: MDNPIRVAVMGCNGRMGKVLLEAITNADGVVVGAALERPGSAVIGLDAGELNGLGKLGVMISDSLDKVRDEFDLIIDFTRPEVTLANLAFALAHQKQMVIGTTGFDDAGKAALKEAGKQIGIVFASNYSVGVNLVFKLLEQAAKVMGDYTDIEIIEGHHRHKVDAPSGTALSMGEVVAKTLGRDLKECAVYGREGITGERDRNTIGFATIRAGDMVGEHTVMFADIGERVEISHKASSRLTFANGAVRAGKWLGQQGAGLYDMQDVLSLK.

Residues 11–16 (GCNGRM) and Glu37 contribute to the NAD(+) site. Arg38 contributes to the NADP(+) binding site. Residues 101–103 (GTT) and 125–128 (ASNY) contribute to the NAD(+) site. His158 acts as the Proton donor/acceptor in catalysis. His159 contacts (S)-2,3,4,5-tetrahydrodipicolinate. Residue Lys162 is the Proton donor of the active site. 168–169 (GT) serves as a coordination point for (S)-2,3,4,5-tetrahydrodipicolinate.

The protein belongs to the DapB family.

The protein localises to the cytoplasm. The catalysed reaction is (S)-2,3,4,5-tetrahydrodipicolinate + NAD(+) + H2O = (2S,4S)-4-hydroxy-2,3,4,5-tetrahydrodipicolinate + NADH + H(+). It catalyses the reaction (S)-2,3,4,5-tetrahydrodipicolinate + NADP(+) + H2O = (2S,4S)-4-hydroxy-2,3,4,5-tetrahydrodipicolinate + NADPH + H(+). The protein operates within amino-acid biosynthesis; L-lysine biosynthesis via DAP pathway; (S)-tetrahydrodipicolinate from L-aspartate: step 4/4. In terms of biological role, catalyzes the conversion of 4-hydroxy-tetrahydrodipicolinate (HTPA) to tetrahydrodipicolinate. The chain is 4-hydroxy-tetrahydrodipicolinate reductase from Aeromonas salmonicida (strain A449).